A 394-amino-acid chain; its full sequence is Tubulin-like protein CetZ4 (394 aa).

GTP-binding positions include 10–14 (QAGGK), 110–112 (GTG), Glu-142, Asn-169, and Asn-187.

This sequence belongs to the CetZ family.

The protein localises to the cytoplasm. In terms of biological role, involved in cell shape control. This Haloferax volcanii (strain ATCC 29605 / DSM 3757 / JCM 8879 / NBRC 14742 / NCIMB 2012 / VKM B-1768 / DS2) (Halobacterium volcanii) protein is Tubulin-like protein CetZ4.